Consider the following 547-residue polypeptide: MNNKKLKSKFIFITGGVVSSLGKGITAASIGNILKNRGFKVSIQKLDPYINIDPGTMSPYQHGEVFVTNDGAETDLDLGHYERFLDENMSKSSNITAGQIYQSVINKEREGKYLGKTVQVIPHITEEIKKKIIKAAIVHQSDIVIVEIGGTVGDIESAPFLEAIRQFRYEVGYHNVLYLHTTLVPYLKKAQEIKTKPTQHSVKELRALGIQPQILVLRSEISINKEIKNKIASLCDINPQAIFEALDVDILYQIILNLFEQRIDHFILNHFQLPNNIQIDLKDWRSLINCIQNLKEKVVIGLVGKYVILHDAYLSIVESLKHAAYYYNSDIEIKWIDSEKLNSTNVKTLLNDCDGILVPHGFGPRAIEGKILAIQYAREQKIPFFGICFGMQLAVVEYARNVLFLDGANSTEIDEKTPHPVITKKIKNSNLGGTLRLGSYRCCLQKNSKSEAIYQQTTIYERHRHRFEMNPSYVSLFEKNNDFLVSGFNPEKNLAEIIELKNHPWFMAVQFHPEFLSRPLKPHPLFKSFVEAALLKNGKNIKKSKLS.

Residues 1-273 are amidoligase domain; that stretch reads MNNKKLKSKF…DHFILNHFQL (273 aa). Residue Ser19 coordinates CTP. Residue Ser19 participates in UTP binding. ATP is bound at residue 20–25; the sequence is SLGKGI. Residue Tyr60 participates in L-glutamine binding. Asp77 provides a ligand contact to ATP. Positions 77 and 147 each coordinate Mg(2+). CTP-binding positions include 154–156, 194–199, and Lys230; these read DIE and KTKPTQ. UTP is bound by residues 194-199 and Lys230; that span reads KTKPTQ. Positions 306-539 constitute a Glutamine amidotransferase type-1 domain; that stretch reads YVILHDAYLS…VEAALLKNGK (234 aa). Residue Gly361 participates in L-glutamine binding. Catalysis depends on Cys388, which acts as the Nucleophile; for glutamine hydrolysis. L-glutamine-binding positions include 389 to 392, Glu412, and Arg466; that span reads FGMQ. Residues His512 and Glu514 contribute to the active site.

Belongs to the CTP synthase family. In terms of assembly, homotetramer.

The catalysed reaction is UTP + L-glutamine + ATP + H2O = CTP + L-glutamate + ADP + phosphate + 2 H(+). It carries out the reaction L-glutamine + H2O = L-glutamate + NH4(+). The enzyme catalyses UTP + NH4(+) + ATP = CTP + ADP + phosphate + 2 H(+). It functions in the pathway pyrimidine metabolism; CTP biosynthesis via de novo pathway; CTP from UDP: step 2/2. Allosterically activated by GTP, when glutamine is the substrate; GTP has no effect on the reaction when ammonia is the substrate. The allosteric effector GTP functions by stabilizing the protein conformation that binds the tetrahedral intermediate(s) formed during glutamine hydrolysis. Inhibited by the product CTP, via allosteric rather than competitive inhibition. Catalyzes the ATP-dependent amination of UTP to CTP with either L-glutamine or ammonia as the source of nitrogen. Regulates intracellular CTP levels through interactions with the four ribonucleotide triphosphates. The chain is CTP synthase from Phytoplasma australiense.